Consider the following 224-residue polypeptide: Ribonuclease 3 (224 aa).

The RNase III domain occupies L4–S126. E39 provides a ligand contact to Mg(2+). The active site involves D43. Mg(2+) is bound by residues D112 and E115. Residue E115 is part of the active site. The DRBM domain occupies D153–I223.

The protein belongs to the ribonuclease III family. In terms of assembly, homodimer. Mg(2+) serves as cofactor.

The protein localises to the cytoplasm. The enzyme catalyses Endonucleolytic cleavage to 5'-phosphomonoester.. Its function is as follows. Digests double-stranded RNA. Involved in the processing of primary rRNA transcript to yield the immediate precursors to the large and small rRNAs (23S and 16S). Processes some mRNAs, and tRNAs when they are encoded in the rRNA operon. Processes pre-crRNA and tracrRNA of type II CRISPR loci if present in the organism. The chain is Ribonuclease 3 from Mannheimia succiniciproducens (strain KCTC 0769BP / MBEL55E).